Reading from the N-terminus, the 57-residue chain is uncharacterized protein (57 aa).

The next 2 membrane-spanning stretches (helical) occupy residues 4-26 (VNILSYFAFSVEAVLFPMSSELW) and 33-55 (ALGYGVEKICLYSFVLVLPIAIL).

The protein resides in the cell membrane. This is an uncharacterized protein from Methanocaldococcus jannaschii (strain ATCC 43067 / DSM 2661 / JAL-1 / JCM 10045 / NBRC 100440) (Methanococcus jannaschii).